We begin with the raw amino-acid sequence, 150 residues long: 3-dehydroquinate dehydratase (150 aa).

The Proton acceptor role is filled by tyrosine 22. The substrate site is built by asparagine 73, histidine 79, and aspartate 86. The active-site Proton donor is the histidine 99. Residues 100-101 (LT) and arginine 110 each bind substrate.

Belongs to the type-II 3-dehydroquinase family. As to quaternary structure, homododecamer.

The enzyme catalyses 3-dehydroquinate = 3-dehydroshikimate + H2O. It functions in the pathway metabolic intermediate biosynthesis; chorismate biosynthesis; chorismate from D-erythrose 4-phosphate and phosphoenolpyruvate: step 3/7. Catalyzes a trans-dehydration via an enolate intermediate. The polypeptide is 3-dehydroquinate dehydratase (Desulforudis audaxviator (strain MP104C)).